Consider the following 489-residue polypeptide: Glycogen synthase (489 aa).

Arg20 provides a ligand contact to ADP-alpha-D-glucose.

This sequence belongs to the glycosyltransferase 1 family. Bacterial/plant glycogen synthase subfamily.

It carries out the reaction [(1-&gt;4)-alpha-D-glucosyl](n) + ADP-alpha-D-glucose = [(1-&gt;4)-alpha-D-glucosyl](n+1) + ADP + H(+). It functions in the pathway glycan biosynthesis; glycogen biosynthesis. Its function is as follows. Synthesizes alpha-1,4-glucan chains using ADP-glucose. This Chlorobium phaeobacteroides (strain DSM 266 / SMG 266 / 2430) protein is Glycogen synthase.